A 396-amino-acid polypeptide reads, in one-letter code: Serine/threonine-protein kinase GRIK1 (396 aa).

The disordered stretch occupies residues 22-65 (ERSRHSPNPYDDDTYSHDSGETSNPGGDDEEGEEEEEVEELSRS). Positions 48-60 (GDDEEGEEEEEVE) are enriched in acidic residues. The 262-residue stretch at 108 to 369 (FVRERKIGSG…LKAVAEHPWI (262 aa)) folds into the Protein kinase domain. ATP is bound by residues 114-122 (IGSGSYGKV) and lysine 137. At threonine 154 the chain carries Phosphothreonine; by autocatalysis. The active-site Proton acceptor is the aspartate 239. Serine 261 is subject to Phosphoserine; by KIN10.

This sequence belongs to the protein kinase superfamily. Ser/Thr protein kinase family. As to quaternary structure, associates with the SNF1-related protein kinase (SnRK) complex. Interacts with AL1, a geminivirus (TGMV) protein essential for viral replication. In terms of tissue distribution, expressed in shoot apical meristem, leaf primordium and emerging petiole (at protein level).

The protein resides in the cytoplasm. Its subcellular location is the nucleus. It catalyses the reaction L-seryl-[protein] + ATP = O-phospho-L-seryl-[protein] + ADP + H(+). The catalysed reaction is L-threonyl-[protein] + ATP = O-phospho-L-threonyl-[protein] + ADP + H(+). Its activity is regulated as follows. Activated when autophosphorylated at Thr-154 and inactivated when phosphorylated at Ser-261 by SnRK1.1/KIN10. Functionally, activates SnRK1.1/KIN10 and SnRK1.2/KIN11 by phosphorylation of their activation-loop 'Thr-198' and 'Thr-176', respectively. Required for the regulation by SnRK1 kinases of the transcription of a large set of genes, the modification the activity of metabolic enzymes, and the control of various nutrient-responsive cellular developmental processes. This Arabidopsis thaliana (Mouse-ear cress) protein is Serine/threonine-protein kinase GRIK1 (GRIK1).